The chain runs to 637 residues: Chaperone protein HtpG (637 aa).

Residues 1-348 (MAEAGQMEKH…SNDLPLNVSR (348 aa)) are a; substrate-binding. Positions 349–565 (EILQDNKITR…DNDMSTQMAK (217 aa)) are b. A c region spans residues 566–637 (LMEAAGQAVP…TRLNKLMLNA (72 aa)).

This sequence belongs to the heat shock protein 90 family. Homodimer.

It localises to the cytoplasm. Molecular chaperone. Has ATPase activity. The sequence is that of Chaperone protein HtpG from Idiomarina loihiensis (strain ATCC BAA-735 / DSM 15497 / L2-TR).